The following is a 438-amino-acid chain: Xylose isomerase (438 aa).

Residues histidine 100 and aspartate 103 contribute to the active site. Mg(2+)-binding residues include glutamate 231, glutamate 267, histidine 270, aspartate 295, aspartate 306, aspartate 308, and aspartate 338.

Belongs to the xylose isomerase family. As to quaternary structure, homotetramer. Mg(2+) is required as a cofactor.

The protein localises to the cytoplasm. The enzyme catalyses alpha-D-xylose = alpha-D-xylulofuranose. The polypeptide is Xylose isomerase (Thermoanaerobacter sp. (strain X514)).